The sequence spans 430 residues: DD-carboxypeptidase/endopeptidase Mpg (430 aa).

3 residues coordinate Zn(2+): His295, Asp299, and His375.

Belongs to the peptidase M23B family. Monomer. Zn(2+) is required as a cofactor. Post-translationally, likely to be synthesized as a proenzyme. The cleavage of the N-terminal domain is probably required for the activation of the enzyme.

The protein resides in the cell outer membrane. Peptidoglycan (PG) degradation activity is completely inhibited by zinc chelating EDTA and phenanthroline. Functionally, has both endopeptidase and DD-carboxypeptidase activities. Degrades cell wall peptidoglycan (PG) to allow consummate expression of pili. Degrades N.gonorrhoeae and E.coli PG side chains in vitro. Required for proper piliation, which in turn is required for normal colony morphology, resistance to H(2)O(2) damage and defense against killing by human polymorphonuclear leukocytes (PMNs). Involved in type IV pilus biogenesis. Involved in resistance against non-oxidative killing by adherent CXCL8/IL8-primed human PMNs. Protects from killing by PMN-produced antimicrobial factors, which kill by a mechanism completely independent of reactive oxygen species (ROS) production of the PMNs. Provides protection against oxidative damage caused by peroxides H(2)O(2) and cumene hydroperoxide in vitro. The sequence is that of DD-carboxypeptidase/endopeptidase Mpg from Neisseria gonorrhoeae (strain ATCC 700825 / FA 1090).